Here is a 108-residue protein sequence, read N- to C-terminus: AKDLLKADDIKKALDAVKAEGSFNHKKFFALVGLKAMSANDVKKVFKAIDADASGFIEEEELKFVLKSFAADGRDLTDAETKAFLKAADKDGDGKIGIDEFETLVHEA.

N-acetylalanine is present on Ala1. 2 consecutive EF-hand domains span residues 37–72 and 76–108; these read MSAN…FAAD and LTDA…VHEA. Residues Asp50, Asp52, Ser54, Phe56, Glu58, Glu61, Asp89, Asp91, Asp93, Lys95, and Glu100 each coordinate Ca(2+).

The protein belongs to the parvalbumin family.

Its function is as follows. In muscle, parvalbumin is thought to be involved in relaxation after contraction. It binds two calcium ions. The chain is Parvalbumin alpha from Esox lucius (Northern pike).